A 252-amino-acid chain; its full sequence is tRNA1(Val) (adenine(37)-N6)-methyltransferase (252 aa).

The protein belongs to the methyltransferase superfamily. tRNA (adenine-N(6)-)-methyltransferase family.

The protein resides in the cytoplasm. It carries out the reaction adenosine(37) in tRNA1(Val) + S-adenosyl-L-methionine = N(6)-methyladenosine(37) in tRNA1(Val) + S-adenosyl-L-homocysteine + H(+). Its function is as follows. Specifically methylates the adenine in position 37 of tRNA(1)(Val) (anticodon cmo5UAC). The sequence is that of tRNA1(Val) (adenine(37)-N6)-methyltransferase from Proteus mirabilis (strain HI4320).